We begin with the raw amino-acid sequence, 514 residues long: Alanine--glyoxylate aminotransferase 2, mitochondrial (514 aa).

The transit peptide at 1-41 (MTLIWRHLLRPLCLVTPAPRILEMRPFLNLGASWTSVTKLS) directs the protein to the mitochondrion. Lys-71 is subject to N6-acetyllysine; alternate. Lys-71 carries the post-translational modification N6-succinyllysine; alternate. The residue at position 84 (Lys-84) is an N6-acetyllysine. N6-acetyllysine; alternate is present on Lys-262. An N6-succinyllysine; alternate modification is found at Lys-262. N6-succinyllysine is present on Lys-304. Lys-350 is modified (N6-(pyridoxal phosphate)lysine). An N6-acetyllysine; alternate modification is found at Lys-420. Lys-420 is modified (N6-succinyllysine; alternate).

It belongs to the class-III pyridoxal-phosphate-dependent aminotransferase family. In terms of assembly, homotetramer. It depends on pyridoxal 5'-phosphate as a cofactor.

It is found in the mitochondrion. The enzyme catalyses glyoxylate + L-alanine = glycine + pyruvate. It carries out the reaction (R)-3-amino-2-methylpropanoate + pyruvate = 2-methyl-3-oxopropanoate + L-alanine. It catalyses the reaction 3-oxopropanoate + L-alanine = beta-alanine + pyruvate. The catalysed reaction is 2-oxobutanoate + L-alanine = (2S)-2-aminobutanoate + pyruvate. The enzyme catalyses N(omega),N(omega)-dimethyl-L-arginine + pyruvate = 5-(3,3-dimethylguanidino)-2-oxopentanoate + L-alanine. It carries out the reaction N(omega),N('omega)-dimethyl-L-arginine + pyruvate = 5-(3,3'-dimethylguanidino)-2-oxopentanoate + L-alanine. It catalyses the reaction N(omega),N(omega)-dimethyl-L-arginine + glyoxylate = 5-(3,3-dimethylguanidino)-2-oxopentanoate + glycine. The catalysed reaction is N(omega),N('omega)-dimethyl-L-arginine + glyoxylate = 5-(3,3'-dimethylguanidino)-2-oxopentanoate + glycine. The enzyme catalyses N(omega)-methyl-L-arginine + pyruvate = 5-(3-methylguanidino)-2-oxopentanoate + L-alanine. It carries out the reaction N(omega)-methyl-L-arginine + glyoxylate = 5-(3-methylguanidino)-2-oxopentanoate + glycine. It catalyses the reaction L-ornithine + pyruvate = 5-amino-2-oxopentanoate + L-alanine. The catalysed reaction is L-ornithine + glyoxylate = 5-amino-2-oxopentanoate + glycine. The enzyme catalyses (2S)-2-aminobutanoate + glyoxylate = 2-oxobutanoate + glycine. It carries out the reaction N(omega),N(omega)-dimethyl-L-arginine + oxaloacetate = 5-(3,3-dimethylguanidino)-2-oxopentanoate + L-aspartate. It catalyses the reaction oxaloacetate + L-alanine = L-aspartate + pyruvate. The catalysed reaction is N(omega),N(omega)-dimethyl-L-arginine + 2-oxobutanoate = 5-(3,3-dimethylguanidino)-2-oxopentanoate + (2S)-2-aminobutanoate. The enzyme catalyses 2-oxopentanoate + N(omega),N(omega)-dimethyl-L-arginine = 5-(3,3-dimethylguanidino)-2-oxopentanoate + L-2-aminopentanoate. It carries out the reaction 2-oxohexanoate + N(omega),N(omega)-dimethyl-L-arginine = L-2-aminohexanoate + 5-(3,3-dimethylguanidino)-2-oxopentanoate. Multifunctional aminotransferase with a broad substrate specificity. Catalyzes the conversion of glyoxylate to glycine using alanine as the amino donor. Catalyzes metabolism of not L- but the D-isomer of D-beta-aminoisobutyric acid to generate 2-methyl-3-oxopropanoate and alanine. Catalyzes the transfer of the amino group from beta-alanine to pyruvate to yield L-alanine and 3-oxopropanoate. Can metabolize NG-monomethyl-L-arginine (NMMA), asymmetric NG,NG-dimethyl-L-arginine (ADMA) and symmetric NG,N'G-dimethyl-L-arginine (SDMA). ADMA is a potent inhibitor of nitric-oxide (NO) synthase, and this activity provides mechanism through which the kidney regulates blood pressure. This Pongo abelii (Sumatran orangutan) protein is Alanine--glyoxylate aminotransferase 2, mitochondrial (AGXT2).